The sequence spans 367 residues: Phosphoribosylaminoimidazole-succinocarboxamide synthase (367 aa).

The protein belongs to the SAICAR synthetase family.

The catalysed reaction is 5-amino-1-(5-phospho-D-ribosyl)imidazole-4-carboxylate + L-aspartate + ATP = (2S)-2-[5-amino-1-(5-phospho-beta-D-ribosyl)imidazole-4-carboxamido]succinate + ADP + phosphate + 2 H(+). Its pathway is purine metabolism; IMP biosynthesis via de novo pathway; 5-amino-1-(5-phospho-D-ribosyl)imidazole-4-carboxamide from 5-amino-1-(5-phospho-D-ribosyl)imidazole-4-carboxylate: step 1/2. The chain is Phosphoribosylaminoimidazole-succinocarboxamide synthase from Shewanella putrefaciens (strain CN-32 / ATCC BAA-453).